The sequence spans 101 residues: Integration host factor subunit beta (101 aa).

The segment at Pro57 to Asp101 is disordered. Positions Thr82–Asp101 are enriched in basic and acidic residues.

The protein belongs to the bacterial histone-like protein family. Heterodimer of an alpha and a beta chain.

Its function is as follows. This protein is one of the two subunits of integration host factor, a specific DNA-binding protein that functions in genetic recombination as well as in transcriptional and translational control. The sequence is that of Integration host factor subunit beta from Bradyrhizobium diazoefficiens (strain JCM 10833 / BCRC 13528 / IAM 13628 / NBRC 14792 / USDA 110).